Consider the following 419-residue polypeptide: G-protein coupled receptor 151 (419 aa).

Residues 1–41 (MLAAAFADSNSSSMNVSFAHLHFAGGYLPSDSQDWRTIIPA) lie on the Extracellular side of the membrane. 2 N-linked (GlcNAc...) asparagine glycosylation sites follow: N10 and N15. A helical membrane pass occupies residues 42–62 (LLVAVCLVGFVGNLCVIGILL). Over 63-71 (HNAWKGKPS) the chain is Cytoplasmic. A helical membrane pass occupies residues 72–92 (MIHSLILNLSLADLSLLLFSA). At 93 to 116 (PIRATAYSKSVWDLGWFVCKSSDW) the chain is on the extracellular side. C111 and C187 are joined by a disulfide. Residues 117–137 (FIHTCMAAKSLTIVVVAKVCF) traverse the membrane as a helical segment. Residues 138-153 (MYASDPAKQVSIHNYT) lie on the Cytoplasmic side of the membrane. Residues 154-174 (IWSVLVAIWTVASLLPLPEWF) traverse the membrane as a helical segment. The Extracellular segment spans residues 175–201 (FSTIRHHEGVEMCLVDVPAVAEEFMSM). Residues 202-222 (FGKLYPLLAFGLPLFFASFYF) traverse the membrane as a helical segment. The Cytoplasmic portion of the chain corresponds to 223–252 (WRAYDQCKKRGTKTQNLRNQIRSKQVTVML). A helical transmembrane segment spans residues 253-273 (LSIAIISALLWLPEWVAWLWV). The Extracellular segment spans residues 274 to 286 (WHLKAAGPAPPQG). The chain crosses the membrane as a helical span at residues 287–307 (FIALSQVLMFSISSANPLIFL). Topologically, residues 308–419 (VMSEEFREGL…EDQETGEGVK (112 aa)) are cytoplasmic. A disordered region spans residues 330–419 (PTVSESQETP…EDQETGEGVK (90 aa)). Over residues 332–341 (VSESQETPAG) the composition is skewed to polar residues. Positions 410–419 (EDQETGEGVK) are enriched in acidic residues.

This sequence belongs to the G-protein coupled receptor 1 family. As to expression, high expression in the spinal cord.

It is found in the cell membrane. Proton-sensing G-protein coupled receptor. In Homo sapiens (Human), this protein is G-protein coupled receptor 151 (GPR151).